We begin with the raw amino-acid sequence, 126 residues long: Large ribosomal subunit protein bL19 (126 aa).

It belongs to the bacterial ribosomal protein bL19 family.

Functionally, this protein is located at the 30S-50S ribosomal subunit interface and may play a role in the structure and function of the aminoacyl-tRNA binding site. This chain is Large ribosomal subunit protein bL19, found in Bradyrhizobium diazoefficiens (strain JCM 10833 / BCRC 13528 / IAM 13628 / NBRC 14792 / USDA 110).